Here is a 596-residue protein sequence, read N- to C-terminus: Polyphenol oxidase B, chloroplastic (596 aa).

The segment at 1–23 (MASVVCNSSSSTTTTTLKTPFTS) is disordered. The N-terminal 87 residues, 1 to 87 (MASVVCNSSS…ANAIPLAASA (87 aa)), are a transit peptide targeting the chloroplast. Residues 8 to 23 (SSSSTTTTTLKTPFTS) are compositionally biased toward low complexity. Intrachain disulfides connect cysteine 98/cysteine 114 and cysteine 113/cysteine 182. Cu cation is bound by residues histidine 181, histidine 199, histidine 208, histidine 329, histidine 333, and histidine 371. Residues 185-199 (CNGAYIIGGKELQVH) constitute a cross-link (2'-(S-cysteinyl)-histidine (Cys-His)).

Belongs to the tyrosinase family. Cu(2+) is required as a cofactor.

Its subcellular location is the plastid. The protein resides in the chloroplast thylakoid lumen. The catalysed reaction is 2 catechol + O2 = 2 1,2-benzoquinone + 2 H2O. In terms of biological role, catalyzes the oxidation of mono- and o-diphenols to o-diquinones. This Solanum lycopersicum (Tomato) protein is Polyphenol oxidase B, chloroplastic.